Consider the following 430-residue polypeptide: Glutamate-1-semialdehyde 2,1-aminomutase (430 aa).

Lys267 bears the N6-(pyridoxal phosphate)lysine mark.

Belongs to the class-III pyridoxal-phosphate-dependent aminotransferase family. HemL subfamily. In terms of assembly, homodimer. Pyridoxal 5'-phosphate is required as a cofactor.

The protein resides in the cytoplasm. The catalysed reaction is (S)-4-amino-5-oxopentanoate = 5-aminolevulinate. It functions in the pathway porphyrin-containing compound metabolism; protoporphyrin-IX biosynthesis; 5-aminolevulinate from L-glutamyl-tRNA(Glu): step 2/2. The polypeptide is Glutamate-1-semialdehyde 2,1-aminomutase (Anaeromyxobacter dehalogenans (strain 2CP-1 / ATCC BAA-258)).